Here is a 364-residue protein sequence, read N- to C-terminus: Fructose-bisphosphate aldolase B (364 aa).

A2 bears the N-acetylalanine mark. N6-succinyllysine is present on K13. S36 is subject to Phosphoserine. T39 is subject to Phosphothreonine. R43 is a beta-D-fructose 1,6-bisphosphate binding site. The residue at position 119 (T119) is a Phosphothreonine. N6-succinyllysine is present on K121. A Phosphoserine modification is found at S132. E188 functions as the Proton acceptor in the catalytic mechanism. K230 acts as the Schiff-base intermediate with dihydroxyacetone-P in catalysis. Residues S272, S276, S299, and S301 each carry the phosphoserine modification. 272 to 274 (SGG) serves as a coordination point for beta-D-fructose 1,6-bisphosphate. R304 contacts beta-D-fructose 1,6-bisphosphate. At S309 the chain carries Phosphoserine. An N6-succinyllysine modification is found at K317.

This sequence belongs to the class I fructose-bisphosphate aldolase family. Homotetramer. Interacts with BBS1, BBS2, BBS4 and BBS7. Forms a ternary complex with G6PD and TP53; this interaction is direct.

The protein resides in the cytoplasm. It localises to the cytosol. Its subcellular location is the cytoskeleton. The protein localises to the microtubule organizing center. It is found in the centrosome. The protein resides in the centriolar satellite. The enzyme catalyses beta-D-fructose 1,6-bisphosphate = D-glyceraldehyde 3-phosphate + dihydroxyacetone phosphate. It catalyses the reaction beta-D-fructose 1-phosphate = D-glyceraldehyde + dihydroxyacetone phosphate. It functions in the pathway carbohydrate degradation; glycolysis; D-glyceraldehyde 3-phosphate and glycerone phosphate from D-glucose: step 4/4. It participates in carbohydrate biosynthesis; gluconeogenesis. Its pathway is carbohydrate metabolism; fructose metabolism. Functionally, catalyzes the aldol cleavage of fructose 1,6-biphosphate to form two triosephosphates dihydroxyacetone phosphate and D-glyceraldehyde 3-phosphate in glycolysis as well as the reverse stereospecific aldol addition reaction in gluconeogenesis. In fructolysis, metabolizes fructose 1-phosphate derived from the phosphorylation of dietary fructose by fructokinase into dihydroxyacetone phosphate and D-glyceraldehyde. Acts as an adapter independently of its enzymatic activity, exerts a tumor suppressor role by stabilizing the ternary complex with G6PD and TP53 to inhibit G6PD activity and keep oxidative pentose phosphate metabolism in check. This Ovis aries (Sheep) protein is Fructose-bisphosphate aldolase B (ALDOB).